The following is a 221-amino-acid chain: uncharacterized protein (221 aa).

Low complexity-rich tracts occupy residues 1–27 (MNNN…NNNN) and 140–162 (TTTS…NSSS). 2 disordered regions span residues 1-28 (MNNN…NNNE) and 140-205 (TTTS…NIGG).

This is an uncharacterized protein from Dictyostelium discoideum (Social amoeba).